A 353-amino-acid polypeptide reads, in one-letter code: Protein Wnt-11b-1 (353 aa).

An N-terminal signal peptide occupies residues 1 to 22 (MAQIHHCVTLLLILCCSGLCGA). N-linked (GlcNAc...) asparagine glycans are attached at residues N31, N38, and N88. 5 disulfide bridges follow: C78/C89, C128/C136, C138/C155, C208/C222, and C210/C217. A lipid anchor (O-palmitoleoyl serine; by PORCN) is attached at S214. Sulfotyrosine is present on residues Y274 and Y281. Cystine bridges form between C282/C313, C298/C308, C312/C352, C328/C343, C330/C340, and C335/C336. A glycan (N-linked (GlcNAc...) asparagine) is linked at N299.

This sequence belongs to the Wnt family. As to quaternary structure, homodimer. Secreted homodimers form a complex with wnt5a homodimers; tyrosine sulfation of both wnt11 and wnt5a by tpst1 is required for this interaction. Interacts with the transmembrane receptor fzd7/fz7. Interacts with lrp6 and ryk. Interacts with tdgf1/frl1. Interacts weakly with frzb1 and strongly with frzb2/crescent. Interaction with frzb2/crescent antagonizes wnt11 function in the neuroectoderm, but enhances it in mesodermal tissue. In terms of processing, glycosylation is required for protein secretion. Post-translationally, palmitoleoylation is required for efficient binding to frizzled receptors. Depalmitoleoylation leads to Wnt signaling pathway inhibition.

The protein localises to the secreted. It is found in the extracellular space. Its subcellular location is the extracellular matrix. Its function is as follows. Ligand for the frizzled7 transmembrane receptor. Primarily acts via non-canonical Wnt pathways mediated by either Ca(2+) and PKC, or by JNK and dvl2/dsh. Depending on the cellular context, can also signal via the canonical Wnt pathway mediated by beta-catenin and dvl2/dsh. May also inhibit canonical Wnt signaling. Maternally initiates dorsal/ventral axis formation by a canonical route, which signals via lrp6. In a complex with wnt5a, activates the canonical and non-canonical processes involved in axis formation. In the non-canonical pathway, acts through fzd7/fz7 to induce phosphorylation of dvl2/dsh. Signals through a non-canonical Wnt pathway to regulate convergent extension movements during gastrulation. Interactions with the secreted Wnt antagonist sfrp5 to coordinate foregut development, acting via a non-canonical wnt pathway whereby sfrp5 restricts wnt11b activity to prevent inappropriate foregut formation. Mediates cardiogenesis via non-canonical Wnt signaling involving JNK-activation and PKC. Acts redundantly with wnt11/wnt11r during pronephros induction. This chain is Protein Wnt-11b-1, found in Xenopus tropicalis (Western clawed frog).